The chain runs to 74 residues: Progonadoliberin-3 (74 aa).

The N-terminal stretch at 1–15 is a signal peptide; that stretch reads VQVVVLALVAQVTLS. Residue Gln-16 is modified to Pyrrolidone carboxylic acid. Residue Gly-25 is modified to Glycine amide.

Belongs to the GnRH family.

It localises to the secreted. Stimulates the secretion of gonadotropins. The sequence is that of Progonadoliberin-3 (gnrh3) from Oncorhynchus mykiss (Rainbow trout).